The sequence spans 953 residues: Coatomer subunit beta (953 aa).

7 HEAT repeats span residues 17–54 (DSEPPSEISLKNDLEKGDVKLKTEALKKVIIMILNGEK), 96–131 (QEMILVCDAYRKDLQHPNEFIRGSTLRFLCKLKEAE), 132–168 (LLEPLMPAIRACLEHRHSYVRRNAVLAIYTIYRNFEH), 240–276 (SERARFIRCIYNLLQSSSPAVKYEAAGTLVTLSSAPT), 277–314 (AIKAAAQCYIDLIIKESDNNVKLIVLDRLVELKEHPSH), 316–353 (RVLQDLVMDILRVLSTPDLEVRKKTLQLALDLVSSRNV), and 396–433 (DMAANVIPVLMEFLSDNNEAAAADVLEFVREAIQRFDN).

As to quaternary structure, oligomeric complex that consists of at least the alpha, beta, beta', gamma, delta, epsilon and zeta subunits.

The protein localises to the cytoplasm. It is found in the golgi apparatus membrane. The protein resides in the cytoplasmic vesicle. Its subcellular location is the COPI-coated vesicle membrane. Functionally, the coatomer is a cytosolic protein complex that binds to dilysine motifs and reversibly associates with Golgi non-clathrin-coated vesicles, which further mediate biosynthetic protein transport from the ER, via the Golgi up to the trans Golgi network. Coatomer complex is required for budding from Golgi membranes, and is essential for the retrograde Golgi-to-ER transport of dilysine-tagged proteins. This chain is Coatomer subunit beta (COPB1), found in Gallus gallus (Chicken).